A 245-amino-acid chain; its full sequence is Polyhedrin (245 aa).

Belongs to the polyhedrin family.

Functionally, major component of the virus occlusion bodies, which are large proteinaceous structures (polyhedra), that protect the virus from the outside environment for extended periods until they are ingested by insect larvae. This chain is Polyhedrin, found in Lepidoptera (butterflies and moths).